The sequence spans 127 residues: PanD regulatory factor (127 aa).

One can recognise an N-acetyltransferase domain in the interval 1–127 (MKLTIIRLEK…TAQQGGWEKC (127 aa)). 2 interaction with PanD regions span residues 43-48 (RFNERL) and 66-76 (LRVREVTRRRG). Residues 66-68 (LRV) and 72-79 (TRRRGVGQ) each bind CoA.

This sequence belongs to the PanZ/PanM family. Interacts with PanD in the presence of CoA. Forms a heterooctameric complex composed of four PanD subunits and four PanZ subunits. Monomer in solution.

Its activity is regulated as follows. Activation of PanD processing occurs even at low CoA concentrations. In contrast, full inhibition of PanD catalytic activity only occurs at sufficiently high CoA concentrations. In terms of biological role, controls both the activation and catalytic activity of PanD in a coenzyme A (CoA)-dependent fashion. Binding of CoA or a derivative to PanZ leads to interaction with PanD, which promotes the processing and activation of pro-PanD, and subsequent substrate-mediated inhibition of the active form of PanD. Inhibition of PanD activity is probably the primary metabolic role of PanZ, allowing negative feedback regulation of pantothenate biosynthesis by CoA. In Escherichia coli (strain K12), this protein is PanD regulatory factor.